The sequence spans 158 residues: GTP-dependent dephospho-CoA kinase (158 aa).

The GTP site is built by Asp35, Val36, Asp54, Lys56, Glu109, and Asp132.

It belongs to the GTP-dependent DPCK family.

It catalyses the reaction 3'-dephospho-CoA + GTP = GDP + CoA + H(+). It functions in the pathway cofactor biosynthesis; coenzyme A biosynthesis. In terms of biological role, catalyzes the GTP-dependent phosphorylation of the 3'-hydroxyl group of dephosphocoenzyme A to form coenzyme A (CoA). This Methanococcus maripaludis (strain C7 / ATCC BAA-1331) protein is GTP-dependent dephospho-CoA kinase.